The following is a 387-amino-acid chain: ERBB-3 BINDING PROTEIN 1 (387 aa).

2 necessary for nucleolar localization regions span residues 1–49 (MSDD…IVDL) and 297–387 (LLQP…PMEG). Residues 47–55 (VDLCEKGDA) are RNA-binding. Positions 337–387 (LQPTKTTENEPEIKAWLALPTKTKKKGGGKKKKGKKGDKVEEASQAEPMEG) are disordered. The interaction with RNA stretch occupies residues 356–373 (PTKTKKKGGGKKKKGKKG). The span at 358–372 (KTKKKGGGKKKKGKK) shows a compositional bias: basic residues. The Nuclear localization signal motif lies at 360–369 (KKKGGGKKKK).

Belongs to the peptidase M24 family. In terms of assembly, component of a ribonucleoprotein complex. As to expression, expressed during tuberisation and in roots, nodes, internodes, petioles, leaves, stolons, tubers and sprouts.

It localises to the nucleus. In terms of biological role, binds RNA. Associates with 28S, 18S and 5.8S mature rRNAs, several rRNA precursors and probably U3 small nucleolar RNA. May be involved in regulation of intermediate and late steps of rRNA processing. May be involved in ribosome assembly. Required for expression of cell cycle genes such as CYCD3-1, RNR2A and CDKB1-1. Promotes, in a dose- and auxin-dependent manner, organ growth by stimulating both cell proliferation and expansion, via the regulation of RBR1 levels. The sequence is that of ERBB-3 BINDING PROTEIN 1 from Solanum tuberosum (Potato).